The sequence spans 152 residues: Small ribosomal subunit protein uS19 (152 aa).

It belongs to the universal ribosomal protein uS19 family.

The chain is Small ribosomal subunit protein uS19 (RPS15) from Podospora anserina (Pleurage anserina).